Consider the following 346-residue polypeptide: Probable RNA methyltransferase PA14_40730 (346 aa).

Residue E91 is the Proton acceptor of the active site. The Radical SAM core domain maps to 94–320 (LLPRGGLCVS…TKVRNSAGQD (227 aa)). An intrachain disulfide couples C101 to C325. 3 residues coordinate [4Fe-4S] cluster: C108, C112, and C115. Residues 153–154 (GE), S183, 206–208 (SLH), and N282 contribute to the S-adenosyl-L-methionine site. C325 (S-methylcysteine intermediate) is an active-site residue.

The protein belongs to the radical SAM superfamily. RlmN family. [4Fe-4S] cluster is required as a cofactor.

The protein resides in the cytoplasm. The sequence is that of Probable RNA methyltransferase PA14_40730 from Pseudomonas aeruginosa (strain UCBPP-PA14).